Consider the following 147-residue polypeptide: Endoribonuclease YbeY (147 aa).

Residues His-108, His-112, and His-118 each coordinate Zn(2+).

Belongs to the endoribonuclease YbeY family. Requires Zn(2+) as cofactor.

It is found in the cytoplasm. Single strand-specific metallo-endoribonuclease involved in late-stage 70S ribosome quality control and in maturation of the 3' terminus of the 16S rRNA. In Sulfurovum sp. (strain NBC37-1), this protein is Endoribonuclease YbeY.